Reading from the N-terminus, the 561-residue chain is Putative transport protein KPN78578_08530 (561 aa).

5 consecutive transmembrane segments (helical) span residues 8–28 (LLNG…LCLG), 37–57 (LGNS…HFAI), 66–86 (FMLF…SIFF), 94–114 (MLAL…GKVF), and 158–178 (HLSL…IVGA). RCK C-terminal domains follow at residues 202–288 (LDTD…SFRN) and 292–373 (VFDR…RIGF). A run of 5 helical transmembrane segments spans residues 383-403 (LLAF…TFQF), 406-426 (FSFG…LGFL), 447-467 (FGLM…INNG), 478-498 (AGLI…AYVL), and 540-560 (AIAN…WPGL).

Belongs to the AAE transporter (TC 2.A.81) family. YbjL subfamily.

The protein resides in the cell membrane. The protein is Putative transport protein KPN78578_08530 of Klebsiella pneumoniae subsp. pneumoniae (strain ATCC 700721 / MGH 78578).